A 720-amino-acid chain; its full sequence is MLINLSAVWAAFALSGVLAPPTWPASIDELEDLMFLNTGYHARGFSAGVTPCSFSQQGPSRVASAEWVRTAFHDMATGNSFTGVGGLDASIVFELGGKGGENIGAGFNTTLETYTPFFSTRSSMADLIALGVYTAVRSCGGPVVQVRTGRIDATARGPIGVPQPENSQGTFINQFTRMGFNVSDMIAVTACGHTMGGVHASNFPQIVVPGSAPNDFQLFDSTVSFDEKVAVDFVGGVAGNPLTSTTAKRSQRDADMKVFTADRNVTIKALADQVTFRSTCARVLQKMIEVVPSGVNLTAPIAPYEVKPGRLQLSLASNGSTIAFTGEIRVRTTSRPVTSISKVELVYKDRTGGSSCGSCIITTEYKGTAEGFDDSFAFYGFEARFPVETAISKFNVRVVLNTGETVVYNNNDEEDDNRLIISQKVRKNANTGSVKLSVTTKTPRSCCVTPALTTQSVPMSPQTTVGPYTLYAGNLTLAAAYRSNAKFDVSLTSGGAVISDSFKNTADLSSTCAPFGSNDPTMPDYTFDGCYTDTPESRALTSAAFVKENMTIAACSSLCKGYQFFGLEYGTECYCGDTRSNSSMQAPKSECNQPCGGDSSETCGAGYRIAIYKDDKWVPITSPQIPGYNYTGCYSDSPSNRTLSGSFTYNEKMTVELCASFCNGTKYFGVEYFSECYCGANMFPGSTIQPESDCGFFFSANKTQHCGGSNRINIYTKLDM.

A signal peptide spans 1–24; the sequence is MLINLSAVWAAFALSGVLAPPTWP. Residues asparagine 4, asparagine 108, asparagine 181, asparagine 264, asparagine 296, asparagine 318, asparagine 474, asparagine 549, asparagine 581, asparagine 629, asparagine 640, asparagine 663, and asparagine 701 are each glycosylated (N-linked (GlcNAc...) asparagine). WSC domains lie at 524-615 and 627-718; these read DYTF…YKDD and GYNY…YTKL.

This sequence belongs to the WSCD family.

The protein localises to the secreted. This is WSC domain-containing protein ARB_07870 from Arthroderma benhamiae (strain ATCC MYA-4681 / CBS 112371) (Trichophyton mentagrophytes).